A 794-amino-acid chain; its full sequence is Phenylalanine--tRNA ligase beta subunit (794 aa).

One can recognise a tRNA-binding domain in the interval 40–158; that stretch reads NSLNSELILG…LKKYIGSDVK (119 aa). The region spanning 402–477 is the B5 domain; sequence KNKQSLEIKL…RLYSYDKIDE (76 aa). 4 residues coordinate Mg(2+): D455, D461, E464, and E465. One can recognise an FDX-ACB domain in the interval 702-794; it reads SKFQSSSRDL…NIKQMKVVIR (93 aa).

Belongs to the phenylalanyl-tRNA synthetase beta subunit family. Type 1 subfamily. As to quaternary structure, tetramer of two alpha and two beta subunits. Requires Mg(2+) as cofactor.

It is found in the cytoplasm. The catalysed reaction is tRNA(Phe) + L-phenylalanine + ATP = L-phenylalanyl-tRNA(Phe) + AMP + diphosphate + H(+). The polypeptide is Phenylalanine--tRNA ligase beta subunit (Mycoplasma mycoides subsp. mycoides SC (strain CCUG 32753 / NCTC 10114 / PG1)).